The sequence spans 234 residues: Probable transcriptional regulatory protein PSPTO_3162 (234 aa).

Belongs to the TACO1 family.

It localises to the cytoplasm. This chain is Probable transcriptional regulatory protein PSPTO_3162, found in Pseudomonas syringae pv. tomato (strain ATCC BAA-871 / DC3000).